The chain runs to 218 residues: Adenylate kinase (218 aa).

Residue 10–15 (GAGKGT) coordinates ATP. Positions 30–59 (STGDMFRAAMANQTEMGRLAKSFIDKGELV) are NMP. AMP-binding positions include Thr31, Arg36, 57–59 (ELV), 86–89 (GYPR), and Gln93. The segment at 127 to 165 (GRFICRSCGSTYHKVFNPTKVEGTCDVCGGHEFFQREDD) is LID. ATP is bound at residue Arg128. Positions 131 and 134 each coordinate Zn(2+). 137–138 (TY) provides a ligand contact to ATP. Zn(2+) contacts are provided by Cys151 and Cys154. AMP contacts are provided by Arg162 and Arg173. Position 201 (Gln201) interacts with ATP.

It belongs to the adenylate kinase family. Monomer.

The protein localises to the cytoplasm. The enzyme catalyses AMP + ATP = 2 ADP. The protein operates within purine metabolism; AMP biosynthesis via salvage pathway; AMP from ADP: step 1/1. Catalyzes the reversible transfer of the terminal phosphate group between ATP and AMP. Plays an important role in cellular energy homeostasis and in adenine nucleotide metabolism. In Streptococcus thermophilus (strain CNRZ 1066), this protein is Adenylate kinase.